A 184-amino-acid chain; its full sequence is MKNVTDSFVSLGHWPSAGSFGWNTDILATNLINLSVVIGVLIFFGKGVLSDLLDNRKQRILNTIRNSEELRGGAIEQLEKARARLRKMEMEADQFRVNGYSEIERDKWNLINSTSKTLEQFENFKNETIQFEQQRAINQVRQRVFQQALQGALGTLNSCLNKELHLRTISANIGILGAMKEITD.

A helical membrane pass occupies residues 27–49 (LATNLINLSVVIGVLIFFGKGVL).

The protein belongs to the ATPase B chain family. As to quaternary structure, F-type ATPases have 2 components, F(1) - the catalytic core - and F(0) - the membrane proton channel. F(1) has five subunits: alpha(3), beta(3), gamma(1), delta(1), epsilon(1). F(0) has four main subunits: a(1), b(1), b'(1) and c(10-14). The alpha and beta chains form an alternating ring which encloses part of the gamma chain. F(1) is attached to F(0) by a central stalk formed by the gamma and epsilon chains, while a peripheral stalk is formed by the delta, b and b' chains.

The protein localises to the plastid. It localises to the chloroplast thylakoid membrane. F(1)F(0) ATP synthase produces ATP from ADP in the presence of a proton or sodium gradient. F-type ATPases consist of two structural domains, F(1) containing the extramembraneous catalytic core and F(0) containing the membrane proton channel, linked together by a central stalk and a peripheral stalk. During catalysis, ATP synthesis in the catalytic domain of F(1) is coupled via a rotary mechanism of the central stalk subunits to proton translocation. In terms of biological role, component of the F(0) channel, it forms part of the peripheral stalk, linking F(1) to F(0). The sequence is that of ATP synthase subunit b, chloroplastic from Jasminum nudiflorum (Winter jasmine).